Here is a 506-residue protein sequence, read N- to C-terminus: Glucosidase 2 subunit beta (506 aa).

The N-terminal stretch at 1 to 23 (MKFSQWYTLTAPLLISSLYTVNA) is a signal peptide. Residues Cys86 and Cys108 are joined by a disulfide bond. 2 coiled-coil regions span residues 172-243 (SLVA…LYET) and 338-374 (ESYRRFEAAQRDLDAAEENEKSLEKEHTKLMHELEYH). In terms of domain architecture, MRH spans 279–474 (ESCNNHLSML…KMKSPAACSP (196 aa)). Cystine bridges form between Cys431–Cys460 and Cys445–Cys472. An ER retrieval sequence motif is present at residues 503 to 506 (VDEL).

Heterodimer of a catalytic subunit alpha (gls2) and a subunit beta (gtb1).

Its subcellular location is the endoplasmic reticulum. Functionally, subunit of glucosidase 2, which cleaves sequentially the 2 innermost alpha-1,3-linked glucose residues from the Glc(2)Man(9)GlcNAc(2) oligosaccharide precursor of immature glycoproteins in the endoplasmic reticulum (ER). Specifically required for the cleavage of the final glucose. The subunit beta retains the catalytic subunit alpha in the ER. The protein is Glucosidase 2 subunit beta (gtb1) of Schizosaccharomyces pombe (strain 972 / ATCC 24843) (Fission yeast).